Here is a 157-residue protein sequence, read N- to C-terminus: Ribosomal RNA large subunit methyltransferase H (157 aa).

S-adenosyl-L-methionine is bound by residues leucine 73, glycine 104, and 123–128; that span reads LGPLTL.

The protein belongs to the RNA methyltransferase RlmH family. Homodimer.

Its subcellular location is the cytoplasm. The catalysed reaction is pseudouridine(1915) in 23S rRNA + S-adenosyl-L-methionine = N(3)-methylpseudouridine(1915) in 23S rRNA + S-adenosyl-L-homocysteine + H(+). Functionally, specifically methylates the pseudouridine at position 1915 (m3Psi1915) in 23S rRNA. This chain is Ribosomal RNA large subunit methyltransferase H, found in Xylella fastidiosa (strain M12).